The sequence spans 261 residues: U11/U12 small nuclear ribonucleoprotein 31 kDa protein (261 aa).

Residues 18-51 form a disordered region; sequence YYRYSSVAAPPPSNPKHQPSSSAKSSAPGGGSGG. Residues 57 to 135 enclose the RRM domain; that stretch reads STLYVSNLDF…RKLTVSIAAD (79 aa). The CCHC-type zinc-finger motif lies at 153–169; that stretch reads RCYECGDEGHLSYECPK. Residues 165 to 261 are disordered; sequence YECPKNQLGP…YFSDESDDED (97 aa). The span at 226 to 235 shows a compositional bias: basic and acidic residues; the sequence is AGERLRKREA.

As to quaternary structure, component of the U11/U12 snRNPs that are part of the U12-type spliceosome. In terms of tissue distribution, ubiquitous. Abundantly expressed in the shoot apical neristem.

The protein localises to the nucleus. Functionally, RNA chaperone required for proper U12 intron splicing and for normal growth and development of plants. Mainly responsible for meristem activity. Plays a role in regulating cell division. The polypeptide is U11/U12 small nuclear ribonucleoprotein 31 kDa protein (SNRNP31) (Arabidopsis thaliana (Mouse-ear cress)).